The following is a 116-amino-acid chain: Non-specific lipid-transfer protein 8 (116 aa).

A signal peptide spans M1–S24. 4 disulfide bridges follow: C28–C76, C38–C53, C54–C98, and C74–C112.

Belongs to the plant LTP family.

Plant non-specific lipid-transfer proteins transfer phospholipids as well as galactolipids across membranes. May play a role in wax or cutin deposition in the cell walls of expanding epidermal cells and certain secretory tissues. The sequence is that of Non-specific lipid-transfer protein 8 (LTP8) from Arabidopsis thaliana (Mouse-ear cress).